We begin with the raw amino-acid sequence, 419 residues long: Enolase (419 aa).

Gln160 contacts (2R)-2-phosphoglycerate. Glu204 serves as the catalytic Proton donor. Residues Asp240, Glu283, and Asp309 each contribute to the Mg(2+) site. Lys334, Arg363, Ser364, and Lys385 together coordinate (2R)-2-phosphoglycerate. Residue Lys334 is the Proton acceptor of the active site.

It belongs to the enolase family. The cofactor is Mg(2+).

It is found in the cytoplasm. The protein localises to the secreted. Its subcellular location is the cell surface. The enzyme catalyses (2R)-2-phosphoglycerate = phosphoenolpyruvate + H2O. The protein operates within carbohydrate degradation; glycolysis; pyruvate from D-glyceraldehyde 3-phosphate: step 4/5. Its function is as follows. Catalyzes the reversible conversion of 2-phosphoglycerate (2-PG) into phosphoenolpyruvate (PEP). It is essential for the degradation of carbohydrates via glycolysis. The sequence is that of Enolase from Pyrobaculum aerophilum (strain ATCC 51768 / DSM 7523 / JCM 9630 / CIP 104966 / NBRC 100827 / IM2).